We begin with the raw amino-acid sequence, 263 residues long: tRNA1(Val) (adenine(37)-N6)-methyltransferase (263 aa).

Belongs to the methyltransferase superfamily. tRNA (adenine-N(6)-)-methyltransferase family.

It localises to the cytoplasm. The enzyme catalyses adenosine(37) in tRNA1(Val) + S-adenosyl-L-methionine = N(6)-methyladenosine(37) in tRNA1(Val) + S-adenosyl-L-homocysteine + H(+). Functionally, specifically methylates the adenine in position 37 of tRNA(1)(Val) (anticodon cmo5UAC). In Pseudoalteromonas atlantica (strain T6c / ATCC BAA-1087), this protein is tRNA1(Val) (adenine(37)-N6)-methyltransferase.